We begin with the raw amino-acid sequence, 38 residues long: Large ribosomal subunit protein bL36 (38 aa).

This sequence belongs to the bacterial ribosomal protein bL36 family.

The chain is Large ribosomal subunit protein bL36 from Hahella chejuensis (strain KCTC 2396).